Here is a 178-residue protein sequence, read N- to C-terminus: ATP synthase subunit delta (178 aa).

Belongs to the ATPase delta chain family. As to quaternary structure, F-type ATPases have 2 components, F(1) - the catalytic core - and F(0) - the membrane proton channel. F(1) has five subunits: alpha(3), beta(3), gamma(1), delta(1), epsilon(1). F(0) has three main subunits: a(1), b(2) and c(10-14). The alpha and beta chains form an alternating ring which encloses part of the gamma chain. F(1) is attached to F(0) by a central stalk formed by the gamma and epsilon chains, while a peripheral stalk is formed by the delta and b chains.

The protein localises to the cell inner membrane. Its function is as follows. F(1)F(0) ATP synthase produces ATP from ADP in the presence of a proton or sodium gradient. F-type ATPases consist of two structural domains, F(1) containing the extramembraneous catalytic core and F(0) containing the membrane proton channel, linked together by a central stalk and a peripheral stalk. During catalysis, ATP synthesis in the catalytic domain of F(1) is coupled via a rotary mechanism of the central stalk subunits to proton translocation. This protein is part of the stalk that links CF(0) to CF(1). It either transmits conformational changes from CF(0) to CF(1) or is implicated in proton conduction. The chain is ATP synthase subunit delta from Acinetobacter baumannii (strain AB307-0294).